Reading from the N-terminus, the 526-residue chain is Lysine--tRNA ligase (526 aa).

The short motif at P30 to N38 is the 'HIGH' region element. 6 residues coordinate Zn(2+): D95, C99, H100, H106, C177, and C199. Residues K280–S284 carry the 'KMSKS' region motif.

Belongs to the class-I aminoacyl-tRNA synthetase family. Zn(2+) serves as cofactor.

The protein localises to the cytoplasm. It catalyses the reaction tRNA(Lys) + L-lysine + ATP = L-lysyl-tRNA(Lys) + AMP + diphosphate. This is Lysine--tRNA ligase (lysS) from Thermococcus kodakarensis (strain ATCC BAA-918 / JCM 12380 / KOD1) (Pyrococcus kodakaraensis (strain KOD1)).